Here is a 221-residue protein sequence, read N- to C-terminus: Ubiquitin-conjugating enzyme E2 S (221 aa).

The UBC core domain maps to 11–157; the sequence is QVLRLVYKEV…AHLLTEIHAM (147 aa). Residue Cys95 is the Glycyl thioester intermediate of the active site. Residues 158–221 form a disordered region; it reads GGTSGAPQEP…TDKKRALRRL (64 aa). A compositionally biased stretch (low complexity) spans 193 to 206; it reads GTGTNNSNISNTNI. A compositionally biased stretch (basic residues) spans 208–221; that stretch reads AKKKTDKKRALRRL.

It belongs to the ubiquitin-conjugating enzyme family.

The catalysed reaction is S-ubiquitinyl-[E1 ubiquitin-activating enzyme]-L-cysteine + [E2 ubiquitin-conjugating enzyme]-L-cysteine = [E1 ubiquitin-activating enzyme]-L-cysteine + S-ubiquitinyl-[E2 ubiquitin-conjugating enzyme]-L-cysteine.. Its pathway is protein modification; protein ubiquitination. Its function is as follows. Catalyzes the covalent attachment of ubiquitin to other proteins. Acts as an essential factor of the anaphase promoting complex/cyclosome (APC/C), a cell cycle-regulated ubiquitin ligase that controls progression through mitosis. Acts by specifically elongating 'Lys-11'-linked polyubiquitin chains initiated by the E2 enzyme ube2c/ubch10 on APC/C substrates, enhancing the degradation of APC/C substrates by the proteasome and promoting mitotic exit. The chain is Ubiquitin-conjugating enzyme E2 S (ube2s) from Danio rerio (Zebrafish).